Here is an 889-residue protein sequence, read N- to C-terminus: Voltage-gated potassium channel KCNC3 (889 aa).

The segment at 1–80 (MLSSVCVWSF…CSGLPAVAMG (80 aa)) is important for normal N-type inactivation. Residues 1–291 (MLSSVCVWSF…EDPYSSRAAR (291 aa)) lie on the Cytoplasmic side of the membrane. Residues 10-66 (FSGRQGTRKQHSQPAPTPQPPESSPPPLLPPPQQQCAQPGTAASPAGAPLSCGPGGR) form a disordered region. Pro residues predominate over residues 24–42 (APTPQPPESSPPPLLPPPQ). Positions 159, 165, 186, and 187 each coordinate Zn(2+). Residues 202–231 (DSFEAPDSSGNANANAGGAHDAGLDDEAGA) form a disordered region. Low complexity predominate over residues 211-222 (GNANANAGGAHD). The helical transmembrane segment at 292–310 (YVAFASLFFILISITTFCL) threads the bilayer. Asparagine 321 carries an N-linked (GlcNAc...) asparagine glycan. The helical transmembrane segment at 352 to 371 (VEGVCVVWFTFEFLMRVTFC) threads the bilayer. Over 372–380 (PDKVEFLKS) the chain is Cytoplasmic. Residues 381-399 (SLNIIDCVAILPFYLEVGL) traverse the membrane as a helical segment. A helical; Voltage-sensor membrane pass occupies residues 413–435 (FLRVVRFVRILRIFKLTRHFVGL). Over 436-448 (RVLGHTLRASTNE) the chain is Cytoplasmic. A helical transmembrane segment spans residues 449 to 470 (FLLLIIFLALGVLIFATMIYYA). Residues threonine 504, leucine 505, glycine 506, and tyrosine 507 each coordinate K(+). Positions 504-509 (TLGYGD) match the Selectivity filter motif. Residues 519–540 (LVGALCALAGVLTIAMPVPVIV) form a helical membrane-spanning segment. Residues 541–889 (NNFGMYYSLA…FPSRHSSPAV (349 aa)) are Cytoplasmic-facing. Disordered stretches follow at residues 557-627 (PKKK…LLRG), 691-834 (IDQP…PQSL), and 852-889 (TLGF…SPAV). Arginine 626 carries the omega-N-methylarginine modification. A phosphoserine mark is found at serine 697 and serine 702. Residues 748 to 764 (SQAPPASCPTSTPTQQP) show a composition bias toward low complexity. Phosphothreonine is present on threonine 759. Over residues 794-808 (HRSHQPPGKHQRGGR) the composition is skewed to basic residues.

It belongs to the potassium channel family. C (Shaw) (TC 1.A.1.2) subfamily. Kv3.3/KCNC3 sub-subfamily. As to quaternary structure, homotetramer. Heterotetramer with KCNC1. Interacts (via C-terminus) with HAX1; this interaction modulates channel gating. Identified in a complex with ACTR3, a subunit of the Arp2/3 complex; this interaction is indirect and depends on the presence of HAX1. Post-translationally, N-glycosylated. Detected on Purkinje cells in the cerebellum molecular layer (at protein level).

It localises to the cell membrane. The protein localises to the presynaptic cell membrane. The protein resides in the perikaryon. Its subcellular location is the cell projection. It is found in the axon. It localises to the dendrite. The protein localises to the dendritic spine membrane. The protein resides in the cytoplasm. Its subcellular location is the cell cortex. It is found in the cytoskeleton. It catalyses the reaction K(+)(in) = K(+)(out). In terms of biological role, voltage-gated potassium channel that plays an important role in the rapid repolarization of fast-firing brain neurons. The channel opens in response to the voltage difference across the membrane, forming a potassium-selective channel through which potassium ions pass in accordance with their electrochemical gradient. The channel displays rapid activation and inactivation kinetics. It plays a role in the regulation of the frequency, shape and duration of action potentials in Purkinje cells. Required for normal survival of cerebellar neurons, probably via its role in regulating the duration and frequency of action potentials that in turn regulate the activity of voltage-gated Ca(2+) channels and cellular Ca(2+) homeostasis. Required for normal motor function. Plays a role in the reorganization of the cortical actin cytoskeleton and the formation of actin veil structures in neuronal growth cones via its interaction with HAX1 and the Arp2/3 complex. In Rattus norvegicus (Rat), this protein is Voltage-gated potassium channel KCNC3.